Consider the following 491-residue polypeptide: Nickel-binding protein NikA (491 aa).

Positions 1–18 (MKFKRLATIFSAVLVLSG) are cleaved as a signal peptide. The N-palmitoyl cysteine moiety is linked to residue Cys-19. The S-diacylglycerol cysteine moiety is linked to residue Cys-19.

This sequence belongs to the bacterial solute-binding protein 5 family. As to quaternary structure, the complex is composed of two ATP-binding proteins (NikD and NikE), two transmembrane proteins (NikB and NikC) and a solute-binding protein (NikA).

Its subcellular location is the cell membrane. Functionally, part of the ABC transporter complex NikABCDE (Opp2) involved in nickel import. Binds nickel and transfers it to the membrane-bound permease. Required for full urease activity and plays a significant role in the virulence of S.aureus during urinary tract infection (UTI). May bind nickel via a nickel-chelator. The polypeptide is Nickel-binding protein NikA (Staphylococcus aureus (strain NCTC 8325 / PS 47)).